The following is a 194-amino-acid chain: 21 kDa hemolysin (194 aa).

The first 19 residues, 1-19 (MRTRSRSTVRPLWPPPSPA), serve as a signal peptide directing secretion. 2 BON domains span residues 49-118 (DDEV…RTGE) and 127-194 (IDSW…NYVQ).

It localises to the periplasm. This is 21 kDa hemolysin (hly) from Actinobacillus pleuropneumoniae (Haemophilus pleuropneumoniae).